Here is a 248-residue protein sequence, read N- to C-terminus: Killer cell lectin-like receptor subfamily I member 2 (248 aa).

Residues 1 to 79 (MHKKKHIKHG…GIDPWLTTWQ (79 aa)) are Cytoplasmic-facing. Residues 19–44 (IGTKSPTFQEKQRPSKTDQRSTVWRE) are disordered. Basic and acidic residues predominate over residues 28 to 44 (EKQRPSKTDQRSTVWRE). A helical; Signal-anchor for type II membrane protein transmembrane segment spans residues 80–100 (MITVILATLCIILVTKVGFLI). Over 101-248 (PSLFSKGEKQ…KKTYICEFNI (148 aa)) the chain is Extracellular. 3 disulfide bridges follow: cysteine 132/cysteine 145, cysteine 161/cysteine 244, and cysteine 223/cysteine 236. One can recognise a C-type lectin domain in the interval 139–245 (FGNNFYCVFR…CSAKKTYICE (107 aa)). Residues asparagine 197, asparagine 214, and asparagine 220 are each glycosylated (N-linked (GlcNAc...) asparagine).

Heterodimer with KLRE1. In terms of tissue distribution, expressed in natural killer (NK) cells.

It localises to the cell membrane. In terms of biological role, lectin-like receptor for natural killer (NK) cells. Heterodimer formation with KLRE1 mediates NK cell cytolytic activity. The protein is Killer cell lectin-like receptor subfamily I member 2 of Mus musculus (Mouse).